The chain runs to 156 residues: MNTIEGKLTLTGKEKIAIINARFNHIITDRLVEGAKDAFMRHGGDEKNLSLILVPGAYEIPFALDLAIKSSKFDAICCVGAIIRGSTPHFDYVAAETAKGIAQTTLKYGIPVSFGVLTTENIEQAIERAGSKAGNKGFEAMSSVIEMLNLYKNLKA.

Residues Phe-23, 57–59, and 81–83 each bind 5-amino-6-(D-ribitylamino)uracil; these read AYE and AII. Position 86–87 (86–87) interacts with (2S)-2-hydroxy-3-oxobutyl phosphate; sequence ST. His-89 functions as the Proton donor in the catalytic mechanism. 5-amino-6-(D-ribitylamino)uracil is bound at residue Phe-114. Arg-128 is a binding site for (2S)-2-hydroxy-3-oxobutyl phosphate.

The protein belongs to the DMRL synthase family.

The enzyme catalyses (2S)-2-hydroxy-3-oxobutyl phosphate + 5-amino-6-(D-ribitylamino)uracil = 6,7-dimethyl-8-(1-D-ribityl)lumazine + phosphate + 2 H2O + H(+). It participates in cofactor biosynthesis; riboflavin biosynthesis; riboflavin from 2-hydroxy-3-oxobutyl phosphate and 5-amino-6-(D-ribitylamino)uracil: step 1/2. Catalyzes the formation of 6,7-dimethyl-8-ribityllumazine by condensation of 5-amino-6-(D-ribitylamino)uracil with 3,4-dihydroxy-2-butanone 4-phosphate. This is the penultimate step in the biosynthesis of riboflavin. The chain is 6,7-dimethyl-8-ribityllumazine synthase from Campylobacter hominis (strain ATCC BAA-381 / DSM 21671 / CCUG 45161 / LMG 19568 / NCTC 13146 / CH001A).